A 232-amino-acid chain; its full sequence is Ribosomal RNA small subunit methyltransferase G (232 aa).

Residues G93, L98, 144 to 145, and R163 each bind S-adenosyl-L-methionine; that span reads VE.

Belongs to the methyltransferase superfamily. RNA methyltransferase RsmG family.

It is found in the cytoplasm. It catalyses the reaction guanosine(527) in 16S rRNA + S-adenosyl-L-methionine = N(7)-methylguanosine(527) in 16S rRNA + S-adenosyl-L-homocysteine. Its function is as follows. Specifically methylates the N7 position of guanine in position 527 of 16S rRNA. This is Ribosomal RNA small subunit methyltransferase G from Burkholderia pseudomallei (strain 1710b).